A 249-amino-acid polypeptide reads, in one-letter code: Segregation and condensation protein A (249 aa).

Belongs to the ScpA family. Component of a cohesin-like complex composed of ScpA, ScpB and the Smc homodimer, in which ScpA and ScpB bind to the head domain of Smc. The presence of the three proteins is required for the association of the complex with DNA.

The protein localises to the cytoplasm. Its function is as follows. Participates in chromosomal partition during cell division. May act via the formation of a condensin-like complex containing Smc and ScpB that pull DNA away from mid-cell into both cell halves. In Listeria welshimeri serovar 6b (strain ATCC 35897 / DSM 20650 / CCUG 15529 / CIP 8149 / NCTC 11857 / SLCC 5334 / V8), this protein is Segregation and condensation protein A.